The chain runs to 920 residues: Anoctamin-4 (920 aa).

Residues 1–323 are Cytoplasmic-facing; it reads METSSSGITN…LYFAWLGWYT (323 aa). The segment at 38 to 64 is disordered; the sequence is KDDDSLLHPGNLTSTSDDASRLEAGGE. A helical transmembrane segment spans residues 324-344; sequence GMLFPAAFIGLFVFLYGVITL. Over 345–389 the chain is Extracellular; that stretch reads DHCQVSKEVCQATDIIMCPVCDKYCPFMRLSDSCVYAKVTHLFDN. The helical transmembrane segment at 390–410 threads the bilayer; that stretch reads GATVFFAVFMAVWATVFLEFW. At 411-470 the chain is on the cytoplasmic side; that stretch reads KRRRAVIAYDWDLIDWEEEEEEIRPQFEAKYSKKERMNPISGKPEPYQAFADKCSRLIVS. Residues 471–491 form a helical membrane-spanning segment; sequence ASGIFFMICVVIAAVFGIVIY. Residues 492-512 lie on the Extracellular side of the membrane; it reads RVVTVSTFAAFKWALIRNNSQ. N-linked (GlcNAc...) asparagine glycosylation occurs at Asn509. The chain crosses the membrane as a helical span at residues 513-533; it reads VATTGTAVCINFCIIMLLNVL. Over 534–560 the chain is Cytoplasmic; the sequence is YEKVALLLTNLEQPRTESEWENSFTLK. Residues 561 to 581 traverse the membrane as a helical segment; sequence MFLFQFVNLNSSTFYIAFFLG. Residues 582 to 680 lie on the Extracellular side of the membrane; sequence RFTGHPGAYL…AYGLFDEYLE (99 aa). The chain crosses the membrane as a helical span at residues 681–701; the sequence is MILQFGFTTIFVAAFPLAPLL. Residues 702-733 are Cytoplasmic-facing; it reads ALLNNIIEIRLDAYKFVTQWRRPLASRAKDIG. A helical transmembrane segment spans residues 734–754; it reads IWYGILEGIGILSVITNAFVI. Residues 755–850 are Extracellular-facing; that stretch reads AITSDFIPRL…QFWHVLAARL (96 aa). N-linked (GlcNAc...) asparagine glycans are attached at residues Asn789 and Asn802. A helical membrane pass occupies residues 851 to 871; the sequence is AFIIVFEHLVFCIKHLISYLI. The Cytoplasmic segment spans residues 872–920; the sequence is PDLPKDLRDRMRREKYLIQEMMYEAELERLQKERKERKKNGKAHHNEWP.

It belongs to the anoctamin family.

It is found in the cell membrane. The catalysed reaction is a 1,2-diacyl-sn-glycero-3-phospho-L-serine(in) = a 1,2-diacyl-sn-glycero-3-phospho-L-serine(out). It carries out the reaction a beta-D-galactosyl-(1&lt;-&gt;1')-N-acylsphing-4-enine(out) = a beta-D-galactosyl-(1&lt;-&gt;1')-N-acylsphing-4-enine(in). The enzyme catalyses a 1,2-diacyl-sn-glycero-3-phosphocholine(in) = a 1,2-diacyl-sn-glycero-3-phosphocholine(out). Has calcium-dependent phospholipid scramblase activity; scrambles phosphatidylserine, phosphatidylcholine and galactosylceramide. Does not exhibit calcium-activated chloride channel (CaCC) activity. The sequence is that of Anoctamin-4 from Bos taurus (Bovine).